The following is a 302-amino-acid chain: Meiotic recombination protein rec14 (302 aa).

WD repeat units follow at residues 14–51, 57–96, 101–140, 142–184, 185–226, 227–266, and 269–302; these read AHQA…HSLV, PHKL…FRDL, QHPS…KISE, DTKG…HVLS, GHTS…GQLR, GHAA…CIST, and ETDG…AATE.

In terms of assembly, component of the DSB catalytic core (DSBC) complex, composed of at least rec12, rec6 and rec14. The complex interacts with mde2.

Functionally, required for formation of the rec12-mediated double-strand breaks (DSBs) that initiate meiotic recombination. This Schizosaccharomyces pombe (strain 972 / ATCC 24843) (Fission yeast) protein is Meiotic recombination protein rec14.